A 266-amino-acid polypeptide reads, in one-letter code: MAKQMFRALVALLLTLPVWLYAAPRVITLSPANTELAFAAGITPVGVSSYSDYPPEAQKIEQVSTWQGMNLERIVALKPDLVVAWRGGNAERQVNQLTSLGIKVMWVDAVTIEQIADTLRQLAAWSPQPEKAQQAAQTLLNEYAALNAEYAGKAKKRVFLQFGMNPLFTSGKGSIQHQVLTTCGGENVFADSRVPWPQVSREQVLARHPQAIIVAGKAGEILKIEQYWGNLLKIPVIPLNSDWFERASPRIILAAKQLCNALSQVN.

The N-terminal stretch at Met-1–Ala-22 is a signal peptide. The region spanning Arg-25–Asn-266 is the Fe/B12 periplasmic-binding domain. Cyanocob(III)alamin-binding positions include Tyr-50 and Asp-242 to Arg-246. A disulfide bridge links Cys-183 with Cys-259.

Belongs to the BtuF family. The complex is composed of two ATP-binding proteins (BtuD), two transmembrane proteins (BtuC) and a solute-binding protein (BtuF).

It is found in the periplasm. Functionally, part of the ABC transporter complex BtuCDF involved in vitamin B12 import. Binds vitamin B12 and delivers it to the periplasmic surface of BtuC. The polypeptide is Vitamin B12-binding protein (btuF) (Salmonella typhimurium (strain LT2 / SGSC1412 / ATCC 700720)).